The primary structure comprises 1010 residues: Retinoblastoma-related protein 1 (1010 aa).

Residues M1 to D23 are disordered. Residues T419–L619 are domain A. The tract at residues T419 to P861 is pocket. Residues I620–E730 are spacer. A disordered region spans residues L657 to R679. Basic and acidic residues predominate over residues K664–R679. Residues T731–P861 form a domain B region. Residues S868–L898 are disordered.

Belongs to the retinoblastoma protein (RB) family.

Its subcellular location is the nucleus. Regulator of biological processes that recruits a histone deacetylase to control gene transcription. May play a role in the entry into mitosis, negatively regulating the cell proliferation. Formation of stable complexes with geminiviridae replication-associated proteins may create a cellular environment which favors viral DNA replication. In Oryza sativa subsp. indica (Rice), this protein is Retinoblastoma-related protein 1 (RBR1).